A 199-amino-acid polypeptide reads, in one-letter code: Fe/S biogenesis protein NfuA (199 aa).

The [4Fe-4S] cluster site is built by Cys-151 and Cys-154.

It belongs to the NfuA family. In terms of assembly, homodimer. The cofactor is [4Fe-4S] cluster.

Involved in iron-sulfur cluster biogenesis. Binds a 4Fe-4S cluster, can transfer this cluster to apoproteins, and thereby intervenes in the maturation of Fe/S proteins. Could also act as a scaffold/chaperone for damaged Fe/S proteins. This Stenotrophomonas maltophilia (strain K279a) protein is Fe/S biogenesis protein NfuA.